The sequence spans 390 residues: Phosphoglycerate kinase (390 aa).

Residues 21–23, arginine 36, 59–62, arginine 114, and arginine 147 contribute to the substrate site; these read DLN and HLGR. Residues lysine 198, glutamate 314, and 340–343 each bind ATP; that span reads GGDT.

The protein belongs to the phosphoglycerate kinase family. In terms of assembly, monomer.

Its subcellular location is the cytoplasm. It carries out the reaction (2R)-3-phosphoglycerate + ATP = (2R)-3-phospho-glyceroyl phosphate + ADP. It participates in carbohydrate degradation; glycolysis; pyruvate from D-glyceraldehyde 3-phosphate: step 2/5. In Buchnera aphidicola subsp. Acyrthosiphon pisum (strain APS) (Acyrthosiphon pisum symbiotic bacterium), this protein is Phosphoglycerate kinase (pgk).